We begin with the raw amino-acid sequence, 143 residues long: Transcriptional regulator MraZ (143 aa).

2 consecutive SpoVT-AbrB domains span residues 5–47 (TYTP…PRAE) and 76–119 (TDEQ…DAAA).

The protein belongs to the MraZ family. In terms of assembly, forms oligomers.

The protein resides in the cytoplasm. It localises to the nucleoid. The protein is Transcriptional regulator MraZ of Mycobacterium sp. (strain JLS).